A 548-amino-acid chain; its full sequence is Chaperonin GroEL (548 aa).

Residues 29 to 32 (TLGP), K50, 86 to 90 (DGTTT), G414, 478 to 480 (NAA), and D494 contribute to the ATP site.

Belongs to the chaperonin (HSP60) family. In terms of assembly, forms a cylinder of 14 subunits composed of two heptameric rings stacked back-to-back. Interacts with the co-chaperonin GroES.

Its subcellular location is the cytoplasm. The enzyme catalyses ATP + H2O + a folded polypeptide = ADP + phosphate + an unfolded polypeptide.. Together with its co-chaperonin GroES, plays an essential role in assisting protein folding. The GroEL-GroES system forms a nano-cage that allows encapsulation of the non-native substrate proteins and provides a physical environment optimized to promote and accelerate protein folding. The polypeptide is Chaperonin GroEL (Alcanivorax borkumensis (strain ATCC 700651 / DSM 11573 / NCIMB 13689 / SK2)).